A 329-amino-acid chain; its full sequence is Glycerol-3-phosphate dehydrogenase [NAD(P)+] (329 aa).

Positions 11, 30, and 103 each coordinate NADPH. Sn-glycerol 3-phosphate-binding residues include K103, G132, and S134. Position 136 (A136) interacts with NADPH. The sn-glycerol 3-phosphate site is built by K187, D240, S250, R251, and N252. Residue K187 is the Proton acceptor of the active site. Residue R251 participates in NADPH binding. NADPH contacts are provided by V275 and E277.

It belongs to the NAD-dependent glycerol-3-phosphate dehydrogenase family.

It localises to the cytoplasm. It catalyses the reaction sn-glycerol 3-phosphate + NAD(+) = dihydroxyacetone phosphate + NADH + H(+). The catalysed reaction is sn-glycerol 3-phosphate + NADP(+) = dihydroxyacetone phosphate + NADPH + H(+). Its pathway is membrane lipid metabolism; glycerophospholipid metabolism. Catalyzes the reduction of the glycolytic intermediate dihydroxyacetone phosphate (DHAP) to sn-glycerol 3-phosphate (G3P), the key precursor for phospholipid synthesis. This chain is Glycerol-3-phosphate dehydrogenase [NAD(P)+], found in Methylobacillus flagellatus (strain ATCC 51484 / DSM 6875 / VKM B-1610 / KT).